The chain runs to 197 residues: Recombination protein RecR (197 aa).

The C4-type zinc-finger motif lies at 55 to 70 (CVQCRDFTESEVCAIC). The region spanning 78–173 (QQLCVVESPA…RPSRLAQGMP (96 aa)) is the Toprim domain.

This sequence belongs to the RecR family.

Its function is as follows. May play a role in DNA repair. It seems to be involved in an RecBC-independent recombinational process of DNA repair. It may act with RecF and RecO. This is Recombination protein RecR from Xanthomonas campestris pv. campestris (strain 8004).